Reading from the N-terminus, the 148-residue chain is Protein E6 (148 aa).

Zinc fingers lie at residues 29–65 (CVFC…CARC) and 102–138 (CYTC…CAYC).

The protein belongs to the papillomaviridae E6 protein family. Forms homodimers. Interacts with ubiquitin-protein ligase UBE3A/E6-AP; this interaction stimulates UBE3A ubiquitin activity. Interacts with host TP53 and EP300; this interaction inhibits TP53 activity.

The protein resides in the host cytoplasm. It is found in the host nucleus. In terms of biological role, plays a major role in the induction and maintenance of cellular transformation. E6 associates with host UBE3A/E6-AP ubiquitin-protein ligase and modulates its activity. Sequesters tumor suppressor TP53 in the host cytoplasm and modulates its activity by interacting with host EP300 that results in the reduction of TP53 acetylation and activation. In turn, apoptosis induced by DNA damage is inhibited. E6 also protects host keratinocytes from apoptosis by mediating the degradation of host BAK1. May also inhibit host immune response. This Homo sapiens (Human) protein is Protein E6.